Consider the following 252-residue polypeptide: 5'-nucleotidase SurE (252 aa).

A divalent metal cation contacts are provided by aspartate 8, aspartate 9, serine 39, and asparagine 91.

The protein belongs to the SurE nucleotidase family. It depends on a divalent metal cation as a cofactor.

The protein localises to the cytoplasm. The catalysed reaction is a ribonucleoside 5'-phosphate + H2O = a ribonucleoside + phosphate. In terms of biological role, nucleotidase that shows phosphatase activity on nucleoside 5'-monophosphates. In Legionella pneumophila (strain Corby), this protein is 5'-nucleotidase SurE.